An 895-amino-acid chain; its full sequence is Clathrin interactor EPSIN 2 (895 aa).

Residues 18–150 enclose the ENTH domain; that stretch reads KKVLKVPGVE…NDKERIAEVR (133 aa). Basic and acidic residues-rich tracts occupy residues 150–161, 177–236, and 245–257; these read RQKAAANRDKYR, DKYD…RSRS, and RSSE…DGHS. The disordered stretch occupies residues 150-396; sequence RQKAAANRDK…PTVTSMSAPT (247 aa). Ser270 and Ser282 each carry phosphoserine. The segment covering 329-348 has biased composition (low complexity); that stretch reads AAPEAASPPTGTNTANTTAT. Polar residues-rich tracts occupy residues 349 to 358 and 387 to 396; these read FVNESPSQKV and PTVTSMSAPT. A Clathrin binding motif is present at residues 409–413; it reads LADVF. Disordered stretches follow at residues 436 to 533 and 758 to 784; these read AGPA…PQEQ and KQTN…GRSG. Positions 440–454 are enriched in low complexity; it reads PSFSTSQPSTQSFDD. Positions 454–456 match the ALPHA-ADR binding motif; sequence DPF. 3 stretches are compositionally biased toward polar residues: residues 464-479, 515-533, and 759-769; these read FTST…NFGA, PASQ…PQEQ, and QTNTPATSTIN.

Belongs to the epsin family. As to quaternary structure, interacts with clathrin, VTI12, DELTA-ADR and ALPHA-ADR.

Its subcellular location is the golgi apparatus. The protein localises to the cytoplasmic vesicle. It is found in the clathrin-coated vesicle. Its function is as follows. May have a role in transport via clathrin-coated vesicles from the trans-Golgi network to endosomes. Stimulates clathrin assembly. Binds to membranes enriched in phosphatidylinositol 3-phosphate (PtdIns(3)P). Plays an important role in protein trafficking. In Arabidopsis thaliana (Mouse-ear cress), this protein is Clathrin interactor EPSIN 2 (EPSIN2).